The sequence spans 357 residues: GTPase Obg (357 aa).

The region spanning 1–159 (MKFVDEAFID…RNLKLELKVL (159 aa)) is the Obg domain. The OBG-type G domain maps to 160–334 (ADVGLLGMPN…LIQAIYQHVR (175 aa)). GTP contacts are provided by residues 166–173 (GMPNAGKS), 191–195 (FTTLH), 213–216 (DIPG), 284–287 (NKLD), and 315–317 (SAL). Mg(2+) is bound by residues Ser-173 and Thr-193.

This sequence belongs to the TRAFAC class OBG-HflX-like GTPase superfamily. OBG GTPase family. In terms of assembly, monomer. It depends on Mg(2+) as a cofactor.

It is found in the cytoplasm. Its function is as follows. An essential GTPase which binds GTP, GDP and possibly (p)ppGpp with moderate affinity, with high nucleotide exchange rates and a fairly low GTP hydrolysis rate. Plays a role in control of the cell cycle, stress response, ribosome biogenesis and in those bacteria that undergo differentiation, in morphogenesis control. The chain is GTPase Obg from Paracidovorax citrulli (strain AAC00-1) (Acidovorax citrulli).